A 117-amino-acid polypeptide reads, in one-letter code: Prefoldin subunit beta (117 aa).

Belongs to the prefoldin subunit beta family. Heterohexamer of two alpha and four beta subunits.

It localises to the cytoplasm. In terms of biological role, molecular chaperone capable of stabilizing a range of proteins. Seems to fulfill an ATP-independent, HSP70-like function in archaeal de novo protein folding. In Thermococcus kodakarensis (strain ATCC BAA-918 / JCM 12380 / KOD1) (Pyrococcus kodakaraensis (strain KOD1)), this protein is Prefoldin subunit beta.